The chain runs to 353 residues: Phosphate acyltransferase (353 aa).

The protein belongs to the PlsX family. As to quaternary structure, homodimer. Probably interacts with PlsY.

Its subcellular location is the cytoplasm. It carries out the reaction a fatty acyl-[ACP] + phosphate = an acyl phosphate + holo-[ACP]. The protein operates within lipid metabolism; phospholipid metabolism. Catalyzes the reversible formation of acyl-phosphate (acyl-PO(4)) from acyl-[acyl-carrier-protein] (acyl-ACP). This enzyme utilizes acyl-ACP as fatty acyl donor, but not acyl-CoA. This chain is Phosphate acyltransferase, found in Nitrosospira multiformis (strain ATCC 25196 / NCIMB 11849 / C 71).